Reading from the N-terminus, the 601-residue chain is Elongation factor 4 (601 aa).

A tr-type G domain is found at 5–187 (EHIRNFSIIA…AIVERLPAPE (183 aa)). Residues 17–22 (DHGKST) and 134–137 (NKVD) each bind GTP.

This sequence belongs to the TRAFAC class translation factor GTPase superfamily. Classic translation factor GTPase family. LepA subfamily.

The protein resides in the cell inner membrane. The enzyme catalyses GTP + H2O = GDP + phosphate + H(+). Required for accurate and efficient protein synthesis under certain stress conditions. May act as a fidelity factor of the translation reaction, by catalyzing a one-codon backward translocation of tRNAs on improperly translocated ribosomes. Back-translocation proceeds from a post-translocation (POST) complex to a pre-translocation (PRE) complex, thus giving elongation factor G a second chance to translocate the tRNAs correctly. Binds to ribosomes in a GTP-dependent manner. The protein is Elongation factor 4 of Nitratidesulfovibrio vulgaris (strain DSM 19637 / Miyazaki F) (Desulfovibrio vulgaris).